Reading from the N-terminus, the 140-residue chain is Nucleoside diphosphate kinase (140 aa).

6 residues coordinate ATP: lysine 10, phenylalanine 58, arginine 86, threonine 92, arginine 103, and asparagine 113. Catalysis depends on histidine 116, which acts as the Pros-phosphohistidine intermediate.

This sequence belongs to the NDK family. As to quaternary structure, homotetramer. It depends on Mg(2+) as a cofactor.

Its subcellular location is the cytoplasm. The catalysed reaction is a 2'-deoxyribonucleoside 5'-diphosphate + ATP = a 2'-deoxyribonucleoside 5'-triphosphate + ADP. It carries out the reaction a ribonucleoside 5'-diphosphate + ATP = a ribonucleoside 5'-triphosphate + ADP. Functionally, major role in the synthesis of nucleoside triphosphates other than ATP. The ATP gamma phosphate is transferred to the NDP beta phosphate via a ping-pong mechanism, using a phosphorylated active-site intermediate. The polypeptide is Nucleoside diphosphate kinase (Haemophilus influenzae (strain PittEE)).